We begin with the raw amino-acid sequence, 410 residues long: MNIYAVGGAIRDELLGVPVQDRDYVVVGATPEQMVAQGYRPVGKDFPVFLHPQTHEEYALARTERKTAAGYHGFQFFYAPDVTLEEDLARRDLTINAMAREVRPDGELTGPVIDPFNGQGDVQARVFRHVSDAFLEDPVRILRIARFAARFVDFTVAPETLALMRKMVADGEVDALVAERVWQEVSRGLMEKKPSRMFEVLRECGALARILPEIDALFGVLQRADYHPEVDTGVHVMMVVDHAAQQGYALQVRFAALAHDLGKATTPEDMLPRHIGHEGRSVDLLKPLCERLRVPNDCRDLAVLVAREHGNIHRVMEMGAAALVRLLERSDAIRKPARFAEALQACEADARGRLGFERREYPQAERLRVALVAARGVDAGAVAKRLADAPAGIKDALHQERVRAVELAIS.

ATP is bound by residues G8 and R11. Residues G8 and R11 each contribute to the CTP site. Mg(2+)-binding residues include D21 and D23. The ATP site is built by R91, R143, and R146. Residues R91, R143, and R146 each coordinate CTP. An HD domain is found at 232-333; it reads TGVHVMMVVD…VRLLERSDAI (102 aa).

Belongs to the tRNA nucleotidyltransferase/poly(A) polymerase family. Bacterial CCA-adding enzyme type 1 subfamily. In terms of assembly, monomer. Can also form homodimers and oligomers. Mg(2+) serves as cofactor. Ni(2+) is required as a cofactor.

It carries out the reaction a tRNA precursor + 2 CTP + ATP = a tRNA with a 3' CCA end + 3 diphosphate. The catalysed reaction is a tRNA with a 3' CCA end + 2 CTP + ATP = a tRNA with a 3' CCACCA end + 3 diphosphate. Catalyzes the addition and repair of the essential 3'-terminal CCA sequence in tRNAs without using a nucleic acid template. Adds these three nucleotides in the order of C, C, and A to the tRNA nucleotide-73, using CTP and ATP as substrates and producing inorganic pyrophosphate. tRNA 3'-terminal CCA addition is required both for tRNA processing and repair. Also involved in tRNA surveillance by mediating tandem CCA addition to generate a CCACCA at the 3' terminus of unstable tRNAs. While stable tRNAs receive only 3'-terminal CCA, unstable tRNAs are marked with CCACCA and rapidly degraded. The chain is Multifunctional CCA protein from Paraburkholderia phytofirmans (strain DSM 17436 / LMG 22146 / PsJN) (Burkholderia phytofirmans).